The chain runs to 796 residues: Protein translocase subunit SecA 2 (796 aa).

Residues Q84, G102–T106, and D496 contribute to the ATP site.

It belongs to the SecA family. Monomer and homodimer. Part of the essential Sec protein translocation apparatus which comprises SecA, SecYEG and auxiliary proteins SecDF. Other proteins may also be involved.

The protein localises to the cell membrane. It localises to the cytoplasm. It catalyses the reaction ATP + H2O + cellular proteinSide 1 = ADP + phosphate + cellular proteinSide 2.. Its function is as follows. Part of the Sec protein translocase complex. Interacts with the SecYEG preprotein conducting channel. Has a central role in coupling the hydrolysis of ATP to the transfer of proteins into and across the cell membrane, serving as an ATP-driven molecular motor driving the stepwise translocation of polypeptide chains across the membrane. This Staphylococcus epidermidis (strain ATCC 12228 / FDA PCI 1200) protein is Protein translocase subunit SecA 2.